A 453-amino-acid polypeptide reads, in one-letter code: Divalent metal cation transporter MntH (453 aa).

The next 11 helical transmembrane spans lie at 39–59 (LAFLGPGLLVAVGYMDPGNWI), 66–86 (AQYGYTLLFIILISSLSAMLL), 114–134 (AIMFWIIAELAIIATDIAEVI), 146–166 (IPLIVGALITVFDVFLLLFIM), 175–195 (AIVGTLIFTVLAIFVFEVYIS), 217–237 (GILYIALGIIGATIMPHNLYL), 270–290 (LSIAFVVNCLLLTLGAALFFG), 310–330 (PALGATLGGIMSTLFAVALLA), 362–382 (LITRSLAVIPVIICLIVFKGN), 388–408 (QLLVFSQVFLSIALPFSLIPL), and 427–447 (INIISWLLIIVLSGLNVYLII).

This sequence belongs to the NRAMP family.

Its subcellular location is the cell membrane. H(+)-stimulated, divalent metal cation uptake system. This is Divalent metal cation transporter MntH from Staphylococcus epidermidis (strain ATCC 12228 / FDA PCI 1200).